The sequence spans 322 residues: Mitochondrial thiamine pyrophosphate carrier 1 (322 aa).

Solcar repeat units lie at residues 12–111 (GSKT…VTLG), 122–208 (PAAA…LRLP), and 215–310 (PFGS…VLGI). 6 consecutive transmembrane segments (helical) span residues 18-38 (MIAGATAGLIARFVIAPLDVV), 92-108 (LMYVSYSAIQFTTYRSV), 128-148 (FIAGASAGAVATTATYPLDLL), 180-200 (FFQGLGAGVGQIVPYMGIFFA), 221-241 (ASAGVIASVIAKTGIFPFDLI), and 285-302 (GLTVSLFKSAPASAVTMW).

The protein belongs to the mitochondrial carrier (TC 2.A.29) family.

It localises to the mitochondrion inner membrane. Functionally, mitochondrial transporter that mediates uptake of thiamine pyrophosphate (ThPP) into mitochondria. This is Mitochondrial thiamine pyrophosphate carrier 1 (tpc1) from Botryotinia fuckeliana (strain B05.10) (Noble rot fungus).